Consider the following 254-residue polypeptide: Alcohol dehydrogenase (254 aa).

10 to 33 is a binding site for NAD(+); the sequence is FVAGLGGIGLDTSREIVKSGPKNL. Ser138 contacts substrate. Tyr151 functions as the Proton acceptor in the catalytic mechanism.

The protein belongs to the short-chain dehydrogenases/reductases (SDR) family. In terms of assembly, homodimer.

It catalyses the reaction a primary alcohol + NAD(+) = an aldehyde + NADH + H(+). The enzyme catalyses a secondary alcohol + NAD(+) = a ketone + NADH + H(+). The sequence is that of Alcohol dehydrogenase (Adh) from Drosophila borealis (Fruit fly).